The sequence spans 432 residues: Asparagine--tRNA ligase (432 aa).

The protein belongs to the class-II aminoacyl-tRNA synthetase family. As to quaternary structure, homodimer.

It localises to the cytoplasm. The enzyme catalyses tRNA(Asn) + L-asparagine + ATP = L-asparaginyl-tRNA(Asn) + AMP + diphosphate + H(+). The sequence is that of Asparagine--tRNA ligase from Lactobacillus helveticus (strain DPC 4571).